A 3258-amino-acid chain; its full sequence is Protein unc-80 homolog (3258 aa).

The interval 152-173 is disordered; that stretch reads VENQGSPGQPCQSSSNDEEENN. Residues 155–166 are compositionally biased toward low complexity; it reads QGSPGQPCQSSS. The residue at position 257 (serine 257) is a Phosphoserine. Disordered regions lie at residues 291–316, 449–468, 522–560, 697–717, 732–784, 963–1019, 1034–1076, 1404–1447, and 1817–1836; these read RGNSFDGSLSSQTSQERGPSHSRASL, RKEDRERKGSIPFHHTGKRR, RRGSSDAATEMESLSARHSHSHHTLVSDLPDPSNSHGEN, KKSENKENETLEKRPSEGAFQ, PAVS…TPVS, PGKK…EQMQ, KSQS…ISLR, EDSK…MSNA, and AVSAEDEEHTTEHTPNHHVP. A compositionally biased stretch (polar residues) spans 295–307; it reads FDGSLSSQTSQER. Phosphoserine is present on serine 525. Positions 698–712 are enriched in basic and acidic residues; the sequence is KSENKENETLEKRPS. Residues 732–767 are compositionally biased toward gly residues; sequence PAVSGAGDGGGEEGGGGDGGGGGGDGGGGGGGGGGP. Basic and acidic residues-rich tracts occupy residues 769–780 and 965–974; these read EKNDKNQEKDES and KKVEENEQES. Residues 1035–1052 show a composition bias toward low complexity; the sequence is SQSAASDTSSQSEQDTSE. Residues 1066 to 1076 show a composition bias toward basic residues; the sequence is ARSRSRRISLR. Positions 1417–1429 are enriched in basic and acidic residues; it reads LKSDAGVEEKKEG. Transmembrane regions (helical) follow at residues 2268–2288, 2398–2418, 2785–2805, and 2831–2851; these read PFVLQLFASVAPLLEFPDAAN, IAATAALATSLQALLYSVEVL, GLAESTSQAAYLALKVILVCF, and LALWDFLDFIVRTRIPIFVLL. Residues 2942–2964 show a composition bias toward polar residues; that stretch reads NTGTGTVWEQDSEPSQQASQDTL. Residues 2942 to 2982 are disordered; sequence NTGTGTVWEQDSEPSQQASQDTLSRTDEEDEENDSISMPSV. Phosphoserine is present on serine 3042. The interval 3051-3213 is disordered; sequence NLLVQQPLGR…DDFTGLETSS (163 aa). The segment covering 3059 to 3068 has biased composition (basic residues); the sequence is GRKRGLRQLR. A compositionally biased stretch (polar residues) spans 3088 to 3100; sequence RLSTTRRSIQPKT. A compositionally biased stretch (low complexity) spans 3117–3129; it reads PEPAAAPTDALPA. Residues 3175 to 3186 show a composition bias toward acidic residues; the sequence is PTEEGEKEEDTE.

Belongs to the unc-80 family. In terms of assembly, NALCN complex consists of NALCN and auxiliary subunits, UNC79, UNC80 and NACL1. These auxiliary subunits are essential for the NALCN complex function. Interacts (via N-terminus half) with NALCN; this interaction facilitates NALCN surface localization. Interacts with UNC79. UNC80 bridges NALCN to UNC79. In terms of processing, phosphorylated on tyrosine residues. As to expression, moderately expressed in fetal brain, spinal cord, skeletal muscle, thymus, spleen, fetal liver, small intestine, colon, kidney and uterus. Highly expressed in adrenal gland, prostate and testis, as well as in brain and cerebellum.

Its subcellular location is the cell membrane. Auxiliary subunit of the NALCN sodium channel complex, a voltage-gated ion channel responsible for the resting Na(+) permeability that controls neuronal excitability. Activated by neuropeptides substance P, neurotensin, and extracellular Ca(2+) that regulates neuronal excitability by controlling the sizes of NALCN-dependent sodium-leak current. UNC80 is essential for NALCN sensitivity to extracellular Ca(2+). This Homo sapiens (Human) protein is Protein unc-80 homolog.